A 198-amino-acid polypeptide reads, in one-letter code: CASP-like protein 4B3 (198 aa).

The segment at 1–27 is disordered; the sequence is MSSSGPPAGDGRDDASGPGPAGAAAAA. Topologically, residues 1–51 are cytoplasmic; that stretch reads MSSSGPPAGDGRDDASGPGPAGAAAAADGSVPVSRSIVERWKMEPAAARAR. A compositionally biased stretch (low complexity) spans 16 to 27; that stretch reads SGPGPAGAAAAA. The chain crosses the membrane as a helical span at residues 52 to 72; the sequence is LLLRAVAWLFSLLALVVMASN. Residues 73-85 lie on the Extracellular side of the membrane; sequence KHGHGGAQDFDNY. Residues 86–106 traverse the membrane as a helical segment; it reads PEYTYCLGISIIAVLYTTAQV. The Cytoplasmic segment spans residues 107 to 124; that stretch reads TRDVHRLSWGRDVIAGRK. A helical membrane pass occupies residues 125–145; sequence AAAVVDFAGDQVVAYLLMSAL. Residues 146-166 are Extracellular-facing; that stretch reads SAAAPVTDYMRQAADNLFTDS. The helical transmembrane segment at 167-187 threads the bilayer; sequence AAAAISMAFLAFLAAGLSALV. Residues 188 to 198 are Cytoplasmic-facing; that stretch reads SGYNLAMEVLV.

This sequence belongs to the Casparian strip membrane proteins (CASP) family. Homodimer and heterodimers.

Its subcellular location is the cell membrane. The polypeptide is CASP-like protein 4B3 (Oryza sativa subsp. japonica (Rice)).